Here is a 218-residue protein sequence, read N- to C-terminus: Ribose-5-phosphate isomerase A (218 aa).

Substrate-binding positions include 28-31 (TGST), 81-84 (DGAD), and 94-97 (KGGG). Catalysis depends on glutamate 103, which acts as the Proton acceptor. Residue lysine 121 participates in substrate binding.

It belongs to the ribose 5-phosphate isomerase family. As to quaternary structure, homodimer.

The enzyme catalyses aldehydo-D-ribose 5-phosphate = D-ribulose 5-phosphate. Its pathway is carbohydrate degradation; pentose phosphate pathway; D-ribose 5-phosphate from D-ribulose 5-phosphate (non-oxidative stage): step 1/1. Catalyzes the reversible conversion of ribose-5-phosphate to ribulose 5-phosphate. This chain is Ribose-5-phosphate isomerase A, found in Alcanivorax borkumensis (strain ATCC 700651 / DSM 11573 / NCIMB 13689 / SK2).